The following is a 269-amino-acid chain: 1,6-dihydroxycyclohexa-2,4-diene-1-carboxylate dehydrogenase (269 aa).

11-35 (VITGAAQGIGRRVAERMAAEGGRLL) provides a ligand contact to NAD(+). Residue Ser142 coordinates substrate. The active-site Proton acceptor is the Tyr153.

It belongs to the short-chain dehydrogenases/reductases (SDR) family. Homodimer.

The catalysed reaction is (1R,6S)-1,6-dihydroxycyclohexa-2,4-diene-1-carboxylate + NAD(+) = catechol + CO2 + NADH. Its pathway is aromatic compound metabolism; benzoate degradation via hydroxylation; catechol from benzoate: step 2/2. Its function is as follows. Degradation of 2-hydro-1,2-dihydroxy benzoate (DHB) to catechol. In Pseudomonas putida (Arthrobacter siderocapsulatus), this protein is 1,6-dihydroxycyclohexa-2,4-diene-1-carboxylate dehydrogenase (xylL).